The sequence spans 188 residues: ATP synthase subunit b (188 aa).

Residues 21–41 traverse the membrane as a helical segment; that stretch reads ILPHLGELIVGIIFAIIIYAV.

This sequence belongs to the ATPase B chain family. As to quaternary structure, F-type ATPases have 2 components, F(1) - the catalytic core - and F(0) - the membrane proton channel. F(1) has five subunits: alpha(3), beta(3), gamma(1), delta(1), epsilon(1). F(0) has three main subunits: a(1), b(2) and c(10-14). The alpha and beta chains form an alternating ring which encloses part of the gamma chain. F(1) is attached to F(0) by a central stalk formed by the gamma and epsilon chains, while a peripheral stalk is formed by the delta and b chains.

The protein localises to the cell membrane. Functionally, f(1)F(0) ATP synthase produces ATP from ADP in the presence of a proton or sodium gradient. F-type ATPases consist of two structural domains, F(1) containing the extramembraneous catalytic core and F(0) containing the membrane proton channel, linked together by a central stalk and a peripheral stalk. During catalysis, ATP synthesis in the catalytic domain of F(1) is coupled via a rotary mechanism of the central stalk subunits to proton translocation. Component of the F(0) channel, it forms part of the peripheral stalk, linking F(1) to F(0). This chain is ATP synthase subunit b, found in Kineococcus radiotolerans (strain ATCC BAA-149 / DSM 14245 / SRS30216).